We begin with the raw amino-acid sequence, 362 residues long: Peptide chain release factor 1 (362 aa).

Gln-237 is subject to N5-methylglutamine. Residues 279 to 305 (RLQQAEDEKRRSEEESSRRNLVASGDR) form a disordered region. Residues 282–296 (QAEDEKRRSEEESSR) are compositionally biased toward basic and acidic residues.

Belongs to the prokaryotic/mitochondrial release factor family. Post-translationally, methylated by PrmC. Methylation increases the termination efficiency of RF1.

It is found in the cytoplasm. In terms of biological role, peptide chain release factor 1 directs the termination of translation in response to the peptide chain termination codons UAG and UAA. The protein is Peptide chain release factor 1 of Colwellia psychrerythraea (strain 34H / ATCC BAA-681) (Vibrio psychroerythus).